Reading from the N-terminus, the 212-residue chain is uncharacterized protein (212 aa).

It belongs to the methyltransferase superfamily.

This is an uncharacterized protein from Synechocystis sp. (strain ATCC 27184 / PCC 6803 / Kazusa).